The primary structure comprises 244 residues: Claudin-12 (244 aa).

The Cytoplasmic segment spans residues 1–10 (MGCRDVHAAT). Residues 11–31 (VLSFLCGIASVAGLFAGTLLP) form a helical membrane-spanning segment. Over 32 to 87 (NWRKLRLITFNRNEKNLTVYTGLWVKCARYDGSSDCLMYDTTWYSSVDQLDLRVLQ) the chain is Extracellular. The helical transmembrane segment at 88 to 108 (FALPLSMLIAMGALLLCLIGM) threads the bilayer. Residues 109–135 (CNTAFRSSVPNIKLAKCLVNSAGCHLV) are Cytoplasmic-facing. The helical transmembrane segment at 136 to 156 (AGLLFFLAGTVSLSPSIWVIF) threads the bilayer. Residues 157-174 (YNIHLNKKFEPVFSFDYA) lie on the Extracellular side of the membrane. The chain crosses the membrane as a helical span at residues 175 to 195 (VYVTIASAGGLFMTSLILFIW). Residues 196–244 (YCTCKSLPSPFWQPLYSHPPSMHTYSQPYSARSRLSAIEIDIPVVSHTT) are Cytoplasmic-facing. A phosphoserine mark is found at serine 228 and serine 231.

Belongs to the claudin family. As to quaternary structure, interacts with OCLN.

Its subcellular location is the cell junction. The protein resides in the tight junction. It is found in the cell membrane. Functionally, plays a major role in tight junction-specific obliteration of the intercellular space, through calcium-independent cell-adhesion activity. The protein is Claudin-12 (CLDN12) of Pongo abelii (Sumatran orangutan).